The sequence spans 255 residues: Hemin import ATP-binding protein HmuV (255 aa).

The ABC transporter domain occupies 2 to 238 (LDVEGLHLKR…AALNAVFGID (237 aa)). ATP is bound at residue 34-41 (GPNGAGKS).

Belongs to the ABC transporter superfamily. Heme (hemin) importer (TC 3.A.1.14.5) family. As to quaternary structure, the complex is composed of two ATP-binding proteins (HmuV), two transmembrane proteins (HmuU) and a solute-binding protein (HmuT).

The protein localises to the cell inner membrane. Part of the ABC transporter complex HmuTUV involved in hemin import. Responsible for energy coupling to the transport system. The protein is Hemin import ATP-binding protein HmuV of Pseudomonas entomophila (strain L48).